A 360-amino-acid polypeptide reads, in one-letter code: Putative F-box protein At3g47150 (360 aa).

The region spanning 6–56 (NTTQIYIPLDLQINILLRLPVKSLLRFRCVSKLWCSIITSHDFRNRHFNIT) is the F-box domain.

In Arabidopsis thaliana (Mouse-ear cress), this protein is Putative F-box protein At3g47150.